An 88-amino-acid chain; its full sequence is Parvalbumin beta 3 (88 aa).

A1 carries the N-acetylalanine modification. One can recognise an EF-hand domain in the interval 31 to 66 (KSPEEVKKFFAIIDQDHSGFIEEEELKLFLQTFSAG). 7 residues coordinate Ca(2+): D44, D46, S48, F50, E52, E55, and E81.

It belongs to the parvalbumin family.

In terms of biological role, in muscle, parvalbumin is thought to be involved in relaxation after contraction. It binds two calcium ions. This Merluccius productus (North Pacific hake) protein is Parvalbumin beta 3.